Here is a 243-residue protein sequence, read N- to C-terminus: Probable septum site-determining protein MinC (243 aa).

Belongs to the MinC family. In terms of assembly, interacts with MinD and FtsZ.

Functionally, cell division inhibitor that blocks the formation of polar Z ring septums. Rapidly oscillates between the poles of the cell to destabilize FtsZ filaments that have formed before they mature into polar Z rings. Prevents FtsZ polymerization. This Wigglesworthia glossinidia brevipalpis protein is Probable septum site-determining protein MinC.